A 327-amino-acid chain; its full sequence is Arabinose 5-phosphate isomerase KpsF (327 aa).

Positions V48–F191 constitute an SIS domain. G63 to G68 contributes to the ATP binding site. Residues G82–T83, H89, H95, K121–G130, and H155–A157 contribute to the substrate site. H89 is a binding site for Zn(2+). CBS domains follow at residues M217–L273 and M282–D327.

In terms of assembly, homotetramer.

It catalyses the reaction D-arabinose 5-phosphate = D-ribulose 5-phosphate. Its activity is regulated as follows. Inhibited by 10 uM zinc, cadmium or mercury ions. Functionally, involved in the biosynthesis of K-antigen capsules. Catalyzes the reversible aldol-ketol isomerization between D-ribulose 5-phosphate (Ru5P) and D-arabinose 5-phosphate (A5P). The protein is Arabinose 5-phosphate isomerase KpsF of Escherichia coli O6:H1 (strain CFT073 / ATCC 700928 / UPEC).